The primary structure comprises 252 residues: tRNA (guanine-N(1)-)-methyltransferase (252 aa).

S-adenosyl-L-methionine is bound by residues glycine 118 and 138–143 (IGDYVL).

This sequence belongs to the RNA methyltransferase TrmD family. Homodimer.

The protein resides in the cytoplasm. It catalyses the reaction guanosine(37) in tRNA + S-adenosyl-L-methionine = N(1)-methylguanosine(37) in tRNA + S-adenosyl-L-homocysteine + H(+). Functionally, specifically methylates guanosine-37 in various tRNAs. The polypeptide is tRNA (guanine-N(1)-)-methyltransferase (Pseudomonas aeruginosa (strain UCBPP-PA14)).